The sequence spans 467 residues: ATP-dependent protease ATPase subunit HslU (467 aa).

Residues valine 22 and 64 to 69 contribute to the ATP site; that span reads GVGKTE. The interval 149–192 is disordered; it reads QTNNPLESLFGGAIPNFGQNNEDEEEPPTEEIKTKRSEIKRQLE. The span at 178 to 192 shows a compositional bias: basic and acidic residues; that stretch reads EEIKTKRSEIKRQLE. 3 residues coordinate ATP: aspartate 280, glutamate 345, and arginine 417.

The protein belongs to the ClpX chaperone family. HslU subfamily. In terms of assembly, a double ring-shaped homohexamer of HslV is capped on each side by a ring-shaped HslU homohexamer. The assembly of the HslU/HslV complex is dependent on binding of ATP.

Its subcellular location is the cytoplasm. In terms of biological role, ATPase subunit of a proteasome-like degradation complex; this subunit has chaperone activity. The binding of ATP and its subsequent hydrolysis by HslU are essential for unfolding of protein substrates subsequently hydrolyzed by HslV. HslU recognizes the N-terminal part of its protein substrates and unfolds these before they are guided to HslV for hydrolysis. This is ATP-dependent protease ATPase subunit HslU from Staphylococcus aureus (strain MRSA252).